The sequence spans 553 residues: Sensitive to high expression protein 9 homolog, mitochondrial (553 aa).

Positions 61 to 174 (FFSTQPPKDT…TAQPELPSRT (114 aa)) are disordered. Residues 62–84 (FSTQPPKDTPENMNNKETGSSNV) are compositionally biased toward polar residues. Positions 103–116 (AKEDTTDATNKSET) are enriched in basic and acidic residues. The span at 133–160 (SDVSSASTSDSANSSETTTTTSETTPEN) shows a compositional bias: low complexity. Coiled coils occupy residues 210–241 (SAIE…HNYK) and 277–309 (RLDH…DLNA). The chain crosses the membrane as a helical span at residues 331-351 (WGTWGLMGVNVLLFLVLQFVA). At 352–523 (EPWRRKRLMK…RIDLKMRDVS (172 aa)) the chain is on the mitochondrial intermembrane side. Disordered regions lie at residues 408 to 428 (ALAS…RTEG) and 443 to 497 (AEEA…QTLS). 2 stretches are compositionally biased toward low complexity: residues 443–473 (AEEA…QTPE) and 484–495 (TWKQTAQKWQQT). A helical transmembrane segment spans residues 524–544 (LLALESAATGAAVVASVAFFV). Residues 545 to 553 (LRSSGSGKA) lie on the Mitochondrial matrix side of the membrane.

It belongs to the SHE9 family. Homooligomer.

The protein resides in the mitochondrion inner membrane. Functionally, required for the maintenance of the structure of the mitochondrial inner membrane. Involved in mitochondrial morphology. Causes growth arrest when highly overexpressed. In Neurospora crassa (strain ATCC 24698 / 74-OR23-1A / CBS 708.71 / DSM 1257 / FGSC 987), this protein is Sensitive to high expression protein 9 homolog, mitochondrial (she-9).